We begin with the raw amino-acid sequence, 430 residues long: uncharacterized protein (430 aa).

This is an uncharacterized protein from Human herpesvirus 7 (strain JI) (HHV-7).